The chain runs to 122 residues: uncharacterized protein (122 aa).

This sequence belongs to the IIV-6 115R family.

This is an uncharacterized protein from Acheta domesticus (House cricket).